Here is a 303-residue protein sequence, read N- to C-terminus: Succinate--CoA ligase [ADP-forming] subunit alpha (303 aa).

CoA is bound by residues 20-23, Lys-46, and 108-110; these read TGSE and ITE. Tyr-173 is a binding site for substrate. His-259 functions as the Tele-phosphohistidine intermediate in the catalytic mechanism.

This sequence belongs to the succinate/malate CoA ligase alpha subunit family. As to quaternary structure, heterotetramer of two alpha and two beta subunits.

It carries out the reaction succinate + ATP + CoA = succinyl-CoA + ADP + phosphate. The catalysed reaction is GTP + succinate + CoA = succinyl-CoA + GDP + phosphate. It participates in carbohydrate metabolism; tricarboxylic acid cycle; succinate from succinyl-CoA (ligase route): step 1/1. Functionally, succinyl-CoA synthetase functions in the citric acid cycle (TCA), coupling the hydrolysis of succinyl-CoA to the synthesis of either ATP or GTP and thus represents the only step of substrate-level phosphorylation in the TCA. The alpha subunit of the enzyme binds the substrates coenzyme A and phosphate, while succinate binding and nucleotide specificity is provided by the beta subunit. The sequence is that of Succinate--CoA ligase [ADP-forming] subunit alpha from Mycobacterium tuberculosis (strain CDC 1551 / Oshkosh).